The chain runs to 89 residues: Small ribosomal subunit protein uS15 (89 aa).

This sequence belongs to the universal ribosomal protein uS15 family. As to quaternary structure, part of the 30S ribosomal subunit. Forms a bridge to the 50S subunit in the 70S ribosome, contacting the 23S rRNA.

Its function is as follows. One of the primary rRNA binding proteins, it binds directly to 16S rRNA where it helps nucleate assembly of the platform of the 30S subunit by binding and bridging several RNA helices of the 16S rRNA. Functionally, forms an intersubunit bridge (bridge B4) with the 23S rRNA of the 50S subunit in the ribosome. The protein is Small ribosomal subunit protein uS15 of Buchnera aphidicola subsp. Baizongia pistaciae (strain Bp).